The following is a 375-amino-acid chain: OVARIAN TUMOR DOMAIN-containing deubiquitinating enzyme 7 (375 aa).

The segment covering 1–18 (MAKTKQQKSKPKKQPHQK) has biased composition (basic residues). Positions 1–23 (MAKTKQQKSKPKKQPHQKQGKDC) are disordered. Positions 37–161 (LKIIQVTADG…GEHYNSVRSK (125 aa)) constitute an OTU domain. D45 is an active-site residue. The Nucleophile role is filled by C48. H154 is an active-site residue. The UBA-like domain maps to 202-250 (HVNAGAIKVVMSGSCCDNTEKAEQVLLQVNGDVDAAIEFLIADQGMESL). Polar residues-rich tracts occupy residues 251–264 (TEND…SDTI) and 290–305 (ASGN…CTTQ). Positions 251-306 (TENDTETASASDTINPKHASDSPMENTEQAREELIEEESASGNNSETVQAKCTTQT) are disordered. A Nuclear localization signal motif is present at residues 308–315 (DKKIPRNK).

It belongs to the peptidase C85 family.

The protein resides in the nucleus. The enzyme catalyses Thiol-dependent hydrolysis of ester, thioester, amide, peptide and isopeptide bonds formed by the C-terminal Gly of ubiquitin (a 76-residue protein attached to proteins as an intracellular targeting signal).. Functionally, hydrolase that can remove conjugated ubiquitin from proteins in vitro and may therefore play an important regulatory role at the level of protein turnover by preventing degradation. Cysteine protease with a preference for 'Lys-63' over 'Lys-48' over 'Met-1' -linked ubiquitin (UB) tetramers as substrates. Also cleaves RUB-GST fusion. The polypeptide is OVARIAN TUMOR DOMAIN-containing deubiquitinating enzyme 7 (Arabidopsis thaliana (Mouse-ear cress)).